A 188-amino-acid chain; its full sequence is Putative manganese efflux pump MntP (188 aa).

Helical transmembrane passes span 3 to 23 (FYALLLIALGMSMDAFAVALA), 35 to 55 (IAATALVFGSVEALTPLAGWV), 63 to 83 (FISEWDHWAAFVLLGGLGLKM), 107 to 127 (VLTAFGTSIDSMIVGVGLAFM), 131 to 151 (IAFAAAIIGMATTVMVAVGLA), and 167 to 187 (AGGLVLIAIGTWTLLSHLGLI).

This sequence belongs to the MntP (TC 9.B.29) family.

It localises to the cell inner membrane. Probably functions as a manganese efflux pump. The protein is Putative manganese efflux pump MntP of Neisseria meningitidis serogroup A / serotype 4A (strain DSM 15465 / Z2491).